We begin with the raw amino-acid sequence, 433 residues long: tRNA(Ile)-lysidine synthase (433 aa).

ATP is bound at residue 37–42 (SGGKDS).

It belongs to the tRNA(Ile)-lysidine synthase family.

It is found in the cytoplasm. The catalysed reaction is cytidine(34) in tRNA(Ile2) + L-lysine + ATP = lysidine(34) in tRNA(Ile2) + AMP + diphosphate + H(+). Functionally, ligates lysine onto the cytidine present at position 34 of the AUA codon-specific tRNA(Ile) that contains the anticodon CAU, in an ATP-dependent manner. Cytidine is converted to lysidine, thus changing the amino acid specificity of the tRNA from methionine to isoleucine. The polypeptide is tRNA(Ile)-lysidine synthase (Leptospira interrogans serogroup Icterohaemorrhagiae serovar Lai (strain 56601)).